The chain runs to 332 residues: Cytoplasmic phosphatidylinositol transfer protein 1 (332 aa).

4 positions are modified to phosphoserine: Ser-119, Ser-122, Ser-270, and Ser-274. The segment covering 272–281 (PSSAPSTPLS) has biased composition (low complexity). Positions 272–332 (PSSAPSTPLS…SEKPCRPKSE (61 aa)) are disordered. Thr-278 carries the phosphothreonine modification.

The protein belongs to the PtdIns transfer protein family. PI transfer class IIB subfamily. Widely expressed in brain, with expression in the gray matters of pre- and postnatal brains. In terms of tissue distribution, weakly expressed in brain and is rather confined to the embryonic stage.

The protein localises to the cytoplasm. It is found in the nucleus. The catalysed reaction is a 1,2-diacyl-sn-glycero-3-phospho-(1D-myo-inositol)(in) = a 1,2-diacyl-sn-glycero-3-phospho-(1D-myo-inositol)(out). It carries out the reaction a 1,2-diacyl-sn-glycero-3-phosphate(in) = a 1,2-diacyl-sn-glycero-3-phosphate(out). In terms of biological role, catalyzes the transfer of phosphatidylinositol (PI) and phosphatidic acid (PA) between membranes. Binds PA derived from the phospholipase D signaling pathway and among the cellular PA species, preferably binds to the C16:0/16:1 and C16:1/18:1 PA species. Functionally, specifically binds to phosphatidylinositol but not to other phospholipids and may play a role in the phosphoinositide-mediated signaling in the neural development. This chain is Cytoplasmic phosphatidylinositol transfer protein 1 (Pitpnc1), found in Mus musculus (Mouse).